Reading from the N-terminus, the 190-residue chain is Threonylcarbamoyl-AMP synthase (190 aa).

A YrdC-like domain is found at 7 to 190; the sequence is GDAIAAAIDV…ALTGELFRQG (184 aa).

This sequence belongs to the SUA5 family. TsaC subfamily.

The protein localises to the cytoplasm. The enzyme catalyses L-threonine + hydrogencarbonate + ATP = L-threonylcarbamoyladenylate + diphosphate + H2O. Functionally, required for the formation of a threonylcarbamoyl group on adenosine at position 37 (t(6)A37) in tRNAs that read codons beginning with adenine. Catalyzes the conversion of L-threonine, HCO(3)(-)/CO(2) and ATP to give threonylcarbamoyl-AMP (TC-AMP) as the acyladenylate intermediate, with the release of diphosphate. This Shigella dysenteriae serotype 1 (strain Sd197) protein is Threonylcarbamoyl-AMP synthase.